The chain runs to 443 residues: UPF0597 protein DVU_0440 (443 aa).

This sequence belongs to the UPF0597 family.

The protein is UPF0597 protein DVU_0440 of Nitratidesulfovibrio vulgaris (strain ATCC 29579 / DSM 644 / CCUG 34227 / NCIMB 8303 / VKM B-1760 / Hildenborough) (Desulfovibrio vulgaris).